Consider the following 670-residue polypeptide: DNA ligase (670 aa).

Residues Asp-32–Asp-36, Ser-81–Leu-82, and Glu-114 each bind NAD(+). Lys-116 serves as the catalytic N6-AMP-lysine intermediate. Residues Arg-137, Glu-174, Lys-291, and Lys-315 each contribute to the NAD(+) site. Zn(2+) is bound by residues Cys-409, Cys-412, Cys-427, and Cys-433. Residues Ala-592–Arg-670 form the BRCT domain.

It belongs to the NAD-dependent DNA ligase family. LigA subfamily. Requires Mg(2+) as cofactor. It depends on Mn(2+) as a cofactor.

The catalysed reaction is NAD(+) + (deoxyribonucleotide)n-3'-hydroxyl + 5'-phospho-(deoxyribonucleotide)m = (deoxyribonucleotide)n+m + AMP + beta-nicotinamide D-nucleotide.. DNA ligase that catalyzes the formation of phosphodiester linkages between 5'-phosphoryl and 3'-hydroxyl groups in double-stranded DNA using NAD as a coenzyme and as the energy source for the reaction. It is essential for DNA replication and repair of damaged DNA. The protein is DNA ligase of Haemophilus influenzae (strain PittGG).